Consider the following 611-residue polypeptide: Podocan (611 aa).

A signal peptide spans 1 to 23 (MAGSRGLPLLLLVLQLFLGPVLP). Positions 60-97 (PEPGPATVDCPRDCACSQEGVVDCGGIDLREFPGDLPE) constitute an LRRNT domain. 5 LRR repeats span residues 98 to 119 (HTNH…ELSR), 122 to 145 (RLET…AFEH), 148 to 169 (SLNY…LPNA), 170 to 190 (LISV…TFGQ), and 193 to 213 (NLRS…PDHM). The N-linked (GlcNAc...) asparagine glycan is linked to Asn-215. 15 LRR repeats span residues 219 to 239 (NVEI…HLPP), 240 to 261 (ALYK…AFSE), 264 to 284 (NLRE…DNET), 290 to 311 (SLEY…LPRS), 312 to 332 (LVLL…VLTP), 335 to 358 (NLEY…AFQG), 361 to 382 (KLHT…LPRR), 383 to 403 (VRTL…DFAT), 406 to 427 (FLEE…RDAF), 432 to 453 (LLRS…LPKN), 477 to 490 (QLRE…RLRS), 503 to 523 (GLQL…GLPP), 524 to 545 (SLEY…AFDS), 548 to 569 (NLKG…ESAF), and 574 to 583 (HLQVLDIEGN). N-linked (GlcNAc...) asparagine glycosylation occurs at Asn-282. The N-linked (GlcNAc...) asparagine glycan is linked to Asn-411. Residues 585–611 (EFGNGSKDKDEEEEEEEEEEDEEEETR) form a disordered region. The span at 594–611 (DEEEEEEEEEEDEEEETR) shows a compositional bias: acidic residues.

This sequence belongs to the small leucine-rich proteoglycan (SLRP) family. SLRP class V subfamily. Binds to type I collagen. Post-translationally, N-glycosylated. Kidney. Expressed in podocytes and likely vascular endothelial cells within the glomerulus.

Its subcellular location is the secreted. The protein resides in the extracellular space. It is found in the extracellular matrix. Its function is as follows. Negatively regulates cell proliferation and cell migration, especially in smooth muscle cells. The protein is Podocan (Podn) of Mus musculus (Mouse).